A 328-amino-acid polypeptide reads, in one-letter code: DNA repair protein RAD51 homolog 4 (328 aa).

Residues 1 to 83 (MGVLRVGLCP…ELKTSTAILS (83 aa)) form a preferentially binds ssDNA region. 107–114 (GGPGSGKT) contacts ATP.

This sequence belongs to the RecA family. RAD51 subfamily. In terms of assembly, part of the BCDX2 complex consisting of RAD51B, RAD51C, RAD51D and XRCC2; the complex has a ring-like structure arranged into a flat disc around a central channel. In the absence of DNA, the BCDX2 subcomplex XRCC2:RAD51D formed a multimeric ring structure; in the presence of single-stranded DNA it formed a filamentous structure with the ssDNA. Interacts with SWSAP1 and ZSWIM7; involved in homologous recombination repair. Interacts with BLM; required for stimulation of BLM activity by the BCDX2 subcomplex XRCC2:RAD51D. Expressed in colon, prostate, spleen, testis, ovary, thymus and small intestine. Weakly expressed in leukocytes.

It is found in the nucleus. It localises to the cytoplasm. The protein localises to the cytoskeleton. The protein resides in the microtubule organizing center. Its subcellular location is the centrosome. It is found in the chromosome. It localises to the telomere. Functionally, involved in the homologous recombination repair (HRR) pathway of double-stranded DNA breaks arising during DNA replication or induced by DNA-damaging agents. Bind to single-stranded DNA (ssDNA) and has DNA-dependent ATPase activity. Part of the RAD51 paralog protein complex BCDX2 which acts in the BRCA1-BRCA2-dependent HR pathway. Upon DNA damage, BCDX2 acts downstream of BRCA2 recruitment and upstream of RAD51 recruitment. BCDX2 binds predominantly to the intersection of the four duplex arms of the Holliday junction and to junction of replication forks. The BCDX2 complex was originally reported to bind single-stranded DNA, single-stranded gaps in duplex DNA and specifically to nicks in duplex DNA. Involved in telomere maintenance. The BCDX2 subcomplex XRCC2:RAD51D can stimulate Holliday junction resolution by BLM. The protein is DNA repair protein RAD51 homolog 4 (RAD51D) of Homo sapiens (Human).